The primary structure comprises 214 residues: Attacin (214 aa).

An N-terminal signal peptide occupies residues 1 to 19 (MSKSVALLLLCACLASGRH). The propeptide occupies 20 to 26 (VPTRARR).

It belongs to the attacin/sarcotoxin-2 family. Highest expression in fat body and hemocytes and to a much lesser extent in Malpighian tubules, silk gland and midgut.

The protein resides in the secreted. Hemolymph antibacterial protein. Has a wide spectrum of activity against both Gram-positive and Gram-negative bacteria. This Bombyx mori (Silk moth) protein is Attacin.